The following is a 393-amino-acid chain: NAD(P)H-quinone oxidoreductase subunit H, chloroplastic (393 aa).

It belongs to the complex I 49 kDa subunit family. As to quaternary structure, NDH is composed of at least 16 different subunits, 5 of which are encoded in the nucleus.

It is found in the plastid. The protein resides in the chloroplast thylakoid membrane. The catalysed reaction is a plastoquinone + NADH + (n+1) H(+)(in) = a plastoquinol + NAD(+) + n H(+)(out). The enzyme catalyses a plastoquinone + NADPH + (n+1) H(+)(in) = a plastoquinol + NADP(+) + n H(+)(out). In terms of biological role, NDH shuttles electrons from NAD(P)H:plastoquinone, via FMN and iron-sulfur (Fe-S) centers, to quinones in the photosynthetic chain and possibly in a chloroplast respiratory chain. The immediate electron acceptor for the enzyme in this species is believed to be plastoquinone. Couples the redox reaction to proton translocation, and thus conserves the redox energy in a proton gradient. The polypeptide is NAD(P)H-quinone oxidoreductase subunit H, chloroplastic (Piper cenocladum (Ant piper)).